Reading from the N-terminus, the 151-residue chain is Large ribosomal subunit protein uL15 (151 aa).

Residues 1 to 62 (MVKLNELFPK…GGQMPLYRRV (62 aa)) form a disordered region. Basic residues predominate over residues 11 to 20 (HGSRKAKRRI).

Belongs to the universal ribosomal protein uL15 family. As to quaternary structure, part of the 50S ribosomal subunit.

Its function is as follows. Binds to the 23S rRNA. In Elusimicrobium minutum (strain Pei191), this protein is Large ribosomal subunit protein uL15.